Here is a 557-residue protein sequence, read N- to C-terminus: Glutamine--tRNA ligase (557 aa).

The 'HIGH' region signature appears at 42-52 (PEPNGYLHIGH). ATP contacts are provided by residues 43–45 (EPN) and 49–55 (HIGHAKS). L-glutamine-binding residues include D75 and Y220. ATP is bound by residues T239 and 270–271 (RL). The 'KMSKS' region motif lies at 277–281 (LTSKR).

This sequence belongs to the class-I aminoacyl-tRNA synthetase family. As to quaternary structure, monomer.

The protein resides in the cytoplasm. It catalyses the reaction tRNA(Gln) + L-glutamine + ATP = L-glutaminyl-tRNA(Gln) + AMP + diphosphate. The polypeptide is Glutamine--tRNA ligase (Haemophilus influenzae (strain 86-028NP)).